The sequence spans 179 residues: Large ribosomal subunit protein uL6 (179 aa).

This sequence belongs to the universal ribosomal protein uL6 family. Part of the 50S ribosomal subunit.

Functionally, this protein binds to the 23S rRNA, and is important in its secondary structure. It is located near the subunit interface in the base of the L7/L12 stalk, and near the tRNA binding site of the peptidyltransferase center. The sequence is that of Large ribosomal subunit protein uL6 from Desulfovibrio desulfuricans (strain ATCC 27774 / DSM 6949 / MB).